The following is a 918-amino-acid chain: Leucine--tRNA ligase (918 aa).

The 'HIGH' region motif lies at 40 to 51 (PYPSGVGLHVGH). Positions 692–696 (KMSKS) match the 'KMSKS' region motif. Lys695 contacts ATP.

This sequence belongs to the class-I aminoacyl-tRNA synthetase family.

It is found in the cytoplasm. It carries out the reaction tRNA(Leu) + L-leucine + ATP = L-leucyl-tRNA(Leu) + AMP + diphosphate. The chain is Leucine--tRNA ligase from Azobacteroides pseudotrichonymphae genomovar. CFP2.